Reading from the N-terminus, the 654-residue chain is Pentatricopeptide repeat-containing protein At5g61400 (654 aa).

PPR repeat units lie at residues Ser-37–Lys-71, Asp-74–Arg-104, Ser-131–Ser-161, Asp-163–Pro-197, Asp-198–Pro-232, Asn-233–Pro-267, Asn-268–Pro-302, Asn-303–Pro-337, Asn-338–Pro-372, Asp-373–Pro-407, Ser-408–Pro-442, Asn-443–Pro-477, Asp-478–Pro-512, Asn-513–Gln-543, Asn-548–Pro-582, and Asp-583–Pro-617.

The protein belongs to the PPR family. P subfamily.

The sequence is that of Pentatricopeptide repeat-containing protein At5g61400 from Arabidopsis thaliana (Mouse-ear cress).